The following is a 146-amino-acid chain: Protein MucA (146 aa).

Residues S62 and K99 each act as for autocatalytic cleavage activity in the active site.

Belongs to the peptidase S24 family.

Its function is as follows. Involved in UV protection and mutation. This chain is Protein MucA (mucA), found in Escherichia coli.